We begin with the raw amino-acid sequence, 209 residues long: V-type ATP synthase subunit D (209 aa).

Belongs to the V-ATPase D subunit family.

Its function is as follows. Produces ATP from ADP in the presence of a proton gradient across the membrane. The chain is V-type ATP synthase subunit D from Anaeromyxobacter dehalogenans (strain 2CP-C).